A 237-amino-acid polypeptide reads, in one-letter code: Ribonuclease PH (237 aa).

Phosphate contacts are provided by residues arginine 86 and 124–126 (GTR).

The protein belongs to the RNase PH family. As to quaternary structure, homohexameric ring arranged as a trimer of dimers.

The enzyme catalyses tRNA(n+1) + phosphate = tRNA(n) + a ribonucleoside 5'-diphosphate. In terms of biological role, phosphorolytic 3'-5' exoribonuclease that plays an important role in tRNA 3'-end maturation. Removes nucleotide residues following the 3'-CCA terminus of tRNAs; can also add nucleotides to the ends of RNA molecules by using nucleoside diphosphates as substrates, but this may not be physiologically important. Probably plays a role in initiation of 16S rRNA degradation (leading to ribosome degradation) during starvation. The protein is Ribonuclease PH of Bradyrhizobium sp. (strain BTAi1 / ATCC BAA-1182).